A 102-amino-acid chain; its full sequence is 10 kDa heat shock protein, mitochondrial (102 aa).

Alanine 2 bears the N-acetylalanine mark. Lysine 8 is modified (N6-acetyllysine). N6-succinyllysine is present on lysine 28. Lysine 40 bears the N6-acetyllysine; alternate mark. Residues lysine 40, lysine 54, and lysine 56 each carry the N6-malonyllysine; alternate modification. N6-succinyllysine; alternate is present on residues lysine 40, lysine 54, and lysine 56. Lysine 56 is modified (N6-acetyllysine; alternate). Residue serine 57 is modified to Phosphoserine. An N6-acetyllysine; alternate mark is found at lysine 66 and lysine 70. N6-succinyllysine; alternate occurs at positions 66 and 70. Position 79 is a phosphothreonine (threonine 79). N6-acetyllysine; alternate is present on residues lysine 80 and lysine 86. Residues lysine 80 and lysine 86 each carry the N6-succinyllysine; alternate modification. An N6-acetyllysine modification is found at lysine 99.

This sequence belongs to the GroES chaperonin family. Homoheptamer arranged in a ring structure. 2 heptameric Hsp10 rings interact with a Hsp60 tetradecamer in the structure of a back-to-back double heptameric ring to form the symmetrical football complex.

It is found in the mitochondrion matrix. In terms of biological role, co-chaperonin implicated in mitochondrial protein import and macromolecular assembly. Together with Hsp60, facilitates the correct folding of imported proteins. May also prevent misfolding and promote the refolding and proper assembly of unfolded polypeptides generated under stress conditions in the mitochondrial matrix. The functional units of these chaperonins consist of heptameric rings of the large subunit Hsp60, which function as a back-to-back double ring. In a cyclic reaction, Hsp60 ring complexes bind one unfolded substrate protein per ring, followed by the binding of ATP and association with 2 heptameric rings of the co-chaperonin Hsp10. This leads to sequestration of the substrate protein in the inner cavity of Hsp60 where, for a certain period of time, it can fold undisturbed by other cell components. Synchronous hydrolysis of ATP in all Hsp60 subunits results in the dissociation of the chaperonin rings and the release of ADP and the folded substrate protein. The polypeptide is 10 kDa heat shock protein, mitochondrial (Hspe1) (Mus musculus (Mouse)).